The sequence spans 155 residues: MLKQVEIFTDGSCLGNPGPGGYGAILRYRGREKTFSAGYTRTTNNRMELMAAIVALEALKEHCEVILSTDSQYVRQGITQWIHNWKKRGWKTADKKPVKNVDLWQRLDAALGQHQIKWEWVKGHAGHPENERCDELARAAAMNPTLEDTGYQVEV.

The region spanning 1-142 (MLKQVEIFTD…CDELARAAAM (142 aa)) is the RNase H type-1 domain. Mg(2+) contacts are provided by aspartate 10, glutamate 48, aspartate 70, and aspartate 134.

It belongs to the RNase H family. Monomer. The cofactor is Mg(2+).

Its subcellular location is the cytoplasm. It carries out the reaction Endonucleolytic cleavage to 5'-phosphomonoester.. Functionally, endonuclease that specifically degrades the RNA of RNA-DNA hybrids. This chain is Ribonuclease H, found in Escherichia fergusonii (strain ATCC 35469 / DSM 13698 / CCUG 18766 / IAM 14443 / JCM 21226 / LMG 7866 / NBRC 102419 / NCTC 12128 / CDC 0568-73).